The sequence spans 368 residues: Quinolinate synthase (368 aa).

His-46 and Ser-63 together coordinate iminosuccinate. Position 110 (Cys-110) interacts with [4Fe-4S] cluster. Iminosuccinate is bound by residues 141 to 143 and Ser-162; that span reads YVN. Cys-230 serves as a coordination point for [4Fe-4S] cluster. Iminosuccinate is bound by residues 256 to 258 and Thr-273; that span reads HPE. Cys-320 serves as a coordination point for [4Fe-4S] cluster.

The protein belongs to the quinolinate synthase family. Type 3 subfamily. In terms of assembly, homotrimer. [4Fe-4S] cluster serves as cofactor.

It localises to the cytoplasm. The enzyme catalyses iminosuccinate + dihydroxyacetone phosphate = quinolinate + phosphate + 2 H2O + H(+). It functions in the pathway cofactor biosynthesis; NAD(+) biosynthesis; quinolinate from iminoaspartate: step 1/1. In terms of biological role, catalyzes the condensation of iminoaspartate with dihydroxyacetone phosphate to form quinolinate. The protein is Quinolinate synthase of Bacillus subtilis (strain 168).